We begin with the raw amino-acid sequence, 215 residues long: Pyrrolidone-carboxylate peptidase (215 aa).

Active-site residues include Glu81, Cys144, and His168.

The protein belongs to the peptidase C15 family. Homotetramer.

It is found in the cytoplasm. The enzyme catalyses Release of an N-terminal pyroglutamyl group from a polypeptide, the second amino acid generally not being Pro.. Its function is as follows. Removes 5-oxoproline from various penultimate amino acid residues except L-proline. The chain is Pyrrolidone-carboxylate peptidase (pcp) from Bacillus amyloliquefaciens (Bacillus velezensis).